Consider the following 1711-residue polypeptide: Nuclear pore complex protein Nup214 (1711 aa).

8 tandem repeats follow at residues 472–473 (FG), 486–487 (FG), 497–498 (FG), 511–512 (FG), 514–515 (FG), 535–536 (FG), 588–589 (TS), and 598–599 (SL). Residues 472-1703 (FGAAAAKAPA…NSNAQKPAFG (1232 aa)) are 45 X 2 AA repeats of F-G. 2 leucine-zipper regions span residues 650-672 (LDDL…VQGL) and 767-788 (LTRL…KSKL). Residues 886 to 905 (KPATANKYTQAAVAPPSPPD) are disordered. Repeat 9 spans residues 1009–1010 (FG). The interval 1012 to 1081 (GSPAVAAPTP…NKSFGFGGFT (70 aa)) is disordered. Basic and acidic residues-rich tracts occupy residues 1037 to 1051 (TKPK…KEFK) and 1058 to 1072 (EESK…ETEN). The interval 1044–1711 (AAESKEFKAV…FGGSSFMNYR (668 aa)) is interaction with emb. Tandem repeats lie at residues 1075–1076 (FG), 1077–1078 (FG), 1097–1098 (FG), 1106–1107 (FG), 1135–1136 (FG), 1218–1219 (FG), 1229–1230 (FG), and 1240–1241 (FG). The span at 1251 to 1261 (TSVTEANNKTD) shows a compositional bias: polar residues. Positions 1251-1270 (TSVTEANNKTDPISTTPSAI) are disordered. Tandem repeats lie at residues 1356–1357 (FG), 1388–1389 (FG), 1399–1400 (FG), 1434–1435 (FG), 1449–1450 (FG), 1458–1459 (FG), 1472–1473 (FG), 1481–1482 (FG), 1487–1488 (FG), 1507–1508 (FG), 1512–1513 (FG), 1539–1540 (FG), 1547–1548 (FG), 1562–1563 (FG), 1571–1572 (FG), 1584–1585 (FG), 1588–1589 (FG), 1601–1602 (FG), 1617–1618 (FG), 1623–1624 (FG), 1629–1630 (FG), 1635–1636 (FG), 1641–1642 (FG), 1647–1648 (FG), 1650–1651 (FG), 1662–1663 (FG), and 1686–1687 (FG). 2 disordered regions span residues 1533–1552 (SPQA…SPAT) and 1557–1614 (SGGS…TTTP). Gly residues-rich tracts occupy residues 1560-1572 (SIFG…GGFG) and 1582-1595 (GGFG…GGGS). Over residues 1596–1614 (VAQTGFGSPQAPQQQTTTP) the composition is skewed to low complexity. Over residues 1688–1698 (NLAQTGNSNAQ) the composition is skewed to polar residues. The tract at residues 1688 to 1711 (NLAQTGNSNAQKPAFGGSSFMNYR) is disordered. Copy 45 of the repeat occupies 1702–1703 (FG).

In terms of assembly, component of the nuclear pore complex. Interacts with mbo/Nup88 and (via C-terminus) with emb to attenuate emb-mediated protein export.

The protein resides in the nucleus. It is found in the nuclear pore complex. Its subcellular location is the nucleus membrane. Part of the nuclear pore complex. Serves as a docking site in the receptor-mediated import of substrates across the nuclear pore complex including emb, RanGAP and phosphorylated Mad. Protects mbo/Nup88 from proteasomal degradation at the nuclear pore. Together with mbo/Nup88, sequesters emb in the cytoplasm and thereby attenuates nuclear export signal (NES)-mediated nuclear export. Together with mbo/Nup88, required for the nuclear import of the Rel family transcription factors dorsal (dl) and Dorsal-related immunity factor (Dif) and the activation of an immune response. This Drosophila melanogaster (Fruit fly) protein is Nuclear pore complex protein Nup214.